Reading from the N-terminus, the 250-residue chain is MNILITNDDGIASSGIKALETILQKEHNTYLIAPLRERSATSMALSIYDSMRVERINDNHYIVDGYPADCVNIGLHGEIFPKIDLVLSGINRGVNMGHDVHYSGTVGAARHGAIHKKLSLAVSSGNIAKDYDYIREAEFVRKFINEYSSQLKVGVVYNMNIPSDFISSMENLRVTKLGKRTYEDTYSQKNIIGGIADFYLGGSELGHSTEEGTDFTAFFSGKISLTPLSLDQTDFSILTQLSDSLSKNIS.

A divalent metal cation is bound by residues Asp-8, Asp-9, Ser-39, and Asn-91.

Belongs to the SurE nucleotidase family. The cofactor is a divalent metal cation.

Its subcellular location is the cytoplasm. It carries out the reaction a ribonucleoside 5'-phosphate + H2O = a ribonucleoside + phosphate. Functionally, nucleotidase that shows phosphatase activity on nucleoside 5'-monophosphates. In Leptospira interrogans serogroup Icterohaemorrhagiae serovar copenhageni (strain Fiocruz L1-130), this protein is 5'-nucleotidase SurE.